We begin with the raw amino-acid sequence, 415 residues long: DNA polymerase IV (415 aa).

One can recognise a UmuC domain in the interval 15-196; that stretch reads ILHVDMNCFF…LSVEAMHGIG (182 aa). D19 and D115 together coordinate Mg(2+). E116 is an active-site residue. Over residues 235–246 the composition is skewed to basic and acidic residues; sequence KRAKGTDDREVD. The interval 235–260 is disordered; that stretch reads KRAKGTDDREVDPSQMGQHKSVGNSM. Polar residues predominate over residues 249 to 260; it reads QMGQHKSVGNSM.

The protein belongs to the DNA polymerase type-Y family. As to quaternary structure, monomer. Mg(2+) serves as cofactor.

It localises to the cytoplasm. The catalysed reaction is DNA(n) + a 2'-deoxyribonucleoside 5'-triphosphate = DNA(n+1) + diphosphate. Poorly processive, error-prone DNA polymerase involved in untargeted mutagenesis. Copies undamaged DNA at stalled replication forks, which arise in vivo from mismatched or misaligned primer ends. These misaligned primers can be extended by PolIV. Exhibits no 3'-5' exonuclease (proofreading) activity. May be involved in translesional synthesis, in conjunction with the beta clamp from PolIII. The chain is DNA polymerase IV from Bacillus cereus (strain ATCC 14579 / DSM 31 / CCUG 7414 / JCM 2152 / NBRC 15305 / NCIMB 9373 / NCTC 2599 / NRRL B-3711).